Consider the following 224-residue polypeptide: Large ribosomal subunit protein uL4 (224 aa).

A disordered region spans residues 52–109 (AAARQGTHSTKTRGDVSGGGRKPYRQKGTGRARQGSTRAPQFTGGGVVHGPKPRDYSQ).

It belongs to the universal ribosomal protein uL4 family. In terms of assembly, part of the 50S ribosomal subunit.

In terms of biological role, one of the primary rRNA binding proteins, this protein initially binds near the 5'-end of the 23S rRNA. It is important during the early stages of 50S assembly. It makes multiple contacts with different domains of the 23S rRNA in the assembled 50S subunit and ribosome. Functionally, forms part of the polypeptide exit tunnel. The sequence is that of Large ribosomal subunit protein uL4 from Mycobacterium marinum (strain ATCC BAA-535 / M).